Consider the following 198-residue polypeptide: 3-isopropylmalate dehydratase small subunit (198 aa).

Belongs to the LeuD family. LeuD type 1 subfamily. In terms of assembly, heterodimer of LeuC and LeuD.

It carries out the reaction (2R,3S)-3-isopropylmalate = (2S)-2-isopropylmalate. It participates in amino-acid biosynthesis; L-leucine biosynthesis; L-leucine from 3-methyl-2-oxobutanoate: step 2/4. Its function is as follows. Catalyzes the isomerization between 2-isopropylmalate and 3-isopropylmalate, via the formation of 2-isopropylmaleate. The protein is 3-isopropylmalate dehydratase small subunit of Corynebacterium jeikeium (strain K411).